A 459-amino-acid polypeptide reads, in one-letter code: MNRLPSSASALACSAHALNLIEKRTLDHEEMKALNREVIEYFKEHVNPGFLEYRKSVTAGGDYGAVEWQAGGLNTLVDTQGQEFIDCLGGFGIFNVGHRNPVVVSAVQNQLAKQPLHSQELLDPLRAMLAKTLAALTPGKLKYSFFCNSGTESVEAALKLAKAYQSPRGKFTFIATSGAFHGKSLGALSATAKSTFRKPFMPLLPGFRHVPFGNIEAMRTALNECKKTGDDVAAVILEPIQGEGGVILPPPGYLTAVRKLCDEFGALMILDEVQTGMGRTGKMFACEHENVQPDILCLAKALGGGVMPIGATIATEEVFSVLFDNPFLHTTTFGGNPLACAAALATINVLLEQNLPAQAEQKGDMLLDGFRQLAREYPDLVQEARGKGMLMAIEFVDNEIGYNFASEMFRQRVLVAGTLNNAKTIRIEPPLTLTIEQCELVIKAARKALAAMRVSVEEA.

Residues 150-151 (GT) and glutamine 274 contribute to the pyridoxal 5'-phosphate site. Lysine 300 carries the post-translational modification N6-(pyridoxal phosphate)lysine. Threonine 332 serves as a coordination point for pyridoxal 5'-phosphate.

Belongs to the class-III pyridoxal-phosphate-dependent aminotransferase family. Putrescine aminotransferase subfamily. The cofactor is pyridoxal 5'-phosphate.

The catalysed reaction is an alkane-alpha,omega-diamine + 2-oxoglutarate = an omega-aminoaldehyde + L-glutamate. It carries out the reaction putrescine + 2-oxoglutarate = 1-pyrroline + L-glutamate + H2O. The enzyme catalyses cadaverine + 2-oxoglutarate = 5-aminopentanal + L-glutamate. It participates in amine and polyamine degradation; putrescine degradation; 4-aminobutanal from putrescine (transaminase route): step 1/1. In terms of biological role, catalyzes the aminotransferase reaction from putrescine to 2-oxoglutarate, leading to glutamate and 4-aminobutanal, which spontaneously cyclizes to form 1-pyrroline. This is the first step in one of two pathways for putrescine degradation, where putrescine is converted into 4-aminobutanoate (gamma-aminobutyrate or GABA) via 4-aminobutanal. Also functions as a cadaverine transaminase in a a L-lysine degradation pathway to succinate that proceeds via cadaverine, glutarate and L-2-hydroxyglutarate. The chain is Putrescine aminotransferase from Escherichia coli O81 (strain ED1a).